We begin with the raw amino-acid sequence, 57 residues long: uncharacterized protein (57 aa).

A helical transmembrane segment spans residues 34–51; it reads TALLDAAAVVVVPGLLAA.

The protein localises to the membrane. This is an uncharacterized protein from Dictyostelium discoideum (Social amoeba).